Reading from the N-terminus, the 59-residue chain is Large ribosomal subunit protein bL32 (59 aa).

This sequence belongs to the bacterial ribosomal protein bL32 family.

This chain is Large ribosomal subunit protein bL32, found in Limosilactobacillus reuteri (strain DSM 20016) (Lactobacillus reuteri).